A 103-amino-acid polypeptide reads, in one-letter code: INTHEKKAQLDLYNEIALEHGHDIQNIDHCLSYITSVDHDSQRAKDICRQFLAHWYDSYVNATRIFDDSDQTKGYDFNKGQWRDFVLKGHRDTNRRIDYSYEI.

Heterodimer of an alpha and a beta chain.

It carries out the reaction a long-chain fatty aldehyde + FMNH2 + O2 = a long-chain fatty acid + hnu + FMN + H2O + 2 H(+). Its function is as follows. Light-emitting reaction in luminous bacteria. This chain is Alkanal monooxygenase alpha chain (luxA), found in Vibrio cholerae.